We begin with the raw amino-acid sequence, 101 residues long: Cilia- and flagella-associated protein 141 (101 aa).

As to quaternary structure, microtubule inner protein component of sperm flagellar doublet microtubules.

The protein resides in the cytoplasm. It localises to the cytoskeleton. The protein localises to the cilium axoneme. Its subcellular location is the flagellum axoneme. Microtubule inner protein (MIP) part of the dynein-decorated doublet microtubules (DMTs) in cilia axoneme, which is required for motile cilia beating. This chain is Cilia- and flagella-associated protein 141, found in Mus musculus (Mouse).